Consider the following 78-residue polypeptide: Signal peptidase complex subunit 1 (78 aa).

At 1-18 (MNYLEGTIDFAGQLRCQK) the chain is on the cytoplasmic side. The chain crosses the membrane as a helical span at residues 19–38 (YMNYGLCTSAVISYIYGYLV). Over 39-42 (QDSY) the chain is Lumenal. The chain crosses the membrane as a helical span at residues 43–63 (CVIKLFLILASLVALVCLPAW). Residues 64 to 78 (SMYNKNPLKFQKKKE) lie on the Cytoplasmic side of the membrane.

This sequence belongs to the SPCS1 family. In terms of assembly, component of the signal peptidase complex (SPC) composed of a catalytic subunit sec11 and three accessory subunits spc1, spc2 and spc3. The complex induces a local thinning of the ER membrane which is used to measure the length of the signal peptide (SP) h-region of protein substrates. This ensures the selectivity of the complex towards h-regions shorter than 18-20 amino acids. SPC associates with the translocon complex.

Its subcellular location is the endoplasmic reticulum membrane. In terms of biological role, component of the signal peptidase complex (SPC) which catalyzes the cleavage of N-terminal signal sequences from nascent proteins as they are translocated into the lumen of the endoplasmic reticulum. Dispensable for SPC enzymatic activity. This is Signal peptidase complex subunit 1 from Schizosaccharomyces pombe (strain 972 / ATCC 24843) (Fission yeast).